The primary structure comprises 250 residues: tRNA (guanine-N(1)-)-methyltransferase (250 aa).

Residues Gly113 and 134 to 139 (IGDYVL) contribute to the S-adenosyl-L-methionine site.

This sequence belongs to the RNA methyltransferase TrmD family. As to quaternary structure, homodimer.

It localises to the cytoplasm. The catalysed reaction is guanosine(37) in tRNA + S-adenosyl-L-methionine = N(1)-methylguanosine(37) in tRNA + S-adenosyl-L-homocysteine + H(+). Its function is as follows. Specifically methylates guanosine-37 in various tRNAs. The chain is tRNA (guanine-N(1)-)-methyltransferase from Buchnera aphidicola subsp. Baizongia pistaciae (strain Bp).